We begin with the raw amino-acid sequence, 509 residues long: Maturase K (509 aa).

The protein belongs to the intron maturase 2 family. MatK subfamily.

The protein resides in the plastid. It is found in the chloroplast. Its function is as follows. Usually encoded in the trnK tRNA gene intron. Probably assists in splicing its own and other chloroplast group II introns. The polypeptide is Maturase K (Otacanthus azureus (Brazilian snapdragon)).